The primary structure comprises 367 residues: DNA replication and repair protein RecF (367 aa).

Gly-30–Thr-37 provides a ligand contact to ATP.

It belongs to the RecF family.

It localises to the cytoplasm. In terms of biological role, the RecF protein is involved in DNA metabolism; it is required for DNA replication and normal SOS inducibility. RecF binds preferentially to single-stranded, linear DNA. It also seems to bind ATP. The chain is DNA replication and repair protein RecF from Pseudomonas putida (strain GB-1).